Reading from the N-terminus, the 188-residue chain is PRA1 family protein 3 (188 aa).

At methionine 1 the chain carries N-acetylmethionine. At 1 to 35 (MDVNIAPLRAWDDFFPGSDRFARPDFRDISKWNNR) the chain is on the cytoplasmic side. 2 helical membrane passes run 36–56 (VVSNLLYYQTNYLVVAAMMIS) and 57–77 (VVGFLSPFNMILGGIVVVLVF). The Cytoplasmic portion of the chain corresponds to 78–93 (TGFVWAAHNKDILRRL). Transmembrane regions (helical) follow at residues 94–114 (KKQYPTVFVMVVMLASYFLIS) and 115–135 (MFGGVMVFVFGITFPLLLMFI). The required for homodimer formation and heterodimer formation with ARL6IP1 stretch occupies residues 103 to 117 (MVVMLASYFLISMFG). At 136–188 (HASLRLRNLKNKLENKIEGIGLKRTPMGIVLDALEQQEENISKFADYISKVNE) the chain is on the cytoplasmic side. Positions 136–188 (HASLRLRNLKNKLENKIEGIGLKRTPMGIVLDALEQQEENISKFADYISKVNE) are targeting to endoplasmic reticulum membrane.

The protein belongs to the PRA1 family. Homodimer. Heterodimer with ARL6IP1. Forms multimers. Interacts with ARL6. Interacts with prenylated RAB1A and RAB3A. Interacts with SLC1A1/EAAC1. Interacts with RTN2 (via first transmembrane domain). Does not interact with VAMP1, VAMP2 or VAMP3.

It is found in the endoplasmic reticulum membrane. The protein localises to the cell membrane. Its subcellular location is the cytoplasm. The protein resides in the cytoskeleton. In terms of biological role, regulates intracellular concentrations of taurine and glutamate. Negatively modulates SLC1A1/EAAC1 glutamate transport activity by decreasing its affinity for glutamate in a PKC activity-dependent manner. Plays a role in the retention of SLC1A1/EAAC1 in the endoplasmic reticulum. The protein is PRA1 family protein 3 (ARL6IP5) of Sus scrofa (Pig).